Here is a 496-residue protein sequence, read N- to C-terminus: MTTFFTSVPPWIQDAKQEEEVGWKLVPRPRGREAESQVKCQCEISGTPFSNGEKLRPHSLPQPEQRPYSCPQLHCGKAFASKYKLYRHMATHSAQKPHQCMYCDKMFHRKDHLRNHLQTHDPNKEALHCSECGKNYNTKLGYRRHLAMHAASSGDLSCKVCLQTFESTQALLEHLKAHSRRVAGGAKEKKHPCDHCDRRFYTRKDVRRHLVVHTGRKDFLCQYCAQRFGRKDHLTRHVKKSHSQELLKIKTEPVDMLGLLSCSSTVSVKEELSPVLCMASRDVMGTKAFPGMLPMGMYGAHIPTMPSTGVPHSLVHNTLPMGMSYPLESSPISSPAQLPPKYQLGSTSYLPDKLPKVEVDSFLAELPGSLSLSSAEPQPASPQPAAAAALLDEALLAKSPANLSEALCAANVDFSHLLGFLPLNLPPCNPPGATGGLVMGYSQAEAQPLLTTLQAQPQDSPGAGGPLNFGPLHSLPPVFTSGLSSTTLPRFHQAFQ.

6 C2H2-type zinc fingers span residues 68–92 (YSCPQLHCGKAFASKYKLYRHMATH), 98–120 (HQCMYCDKMFHRKDHLRNHLQTH), 127–149 (LHCSECGKNYNTKLGYRRHLAMH), 156–178 (LSCKVCLQTFESTQALLEHLKAH), 191–213 (HPCDHCDRRFYTRKDVRRHLVVH), and 219–242 (FLCQYCAQRFGRKDHLTRHVKKSH).

Belongs to the krueppel C2H2-type zinc-finger protein family.

It is found in the nucleus. Shows weak transcriptional activatory activity. The protein is Zinc finger protein PLAGL2 (PLAGL2) of Homo sapiens (Human).